A 150-amino-acid polypeptide reads, in one-letter code: MNKTSLPPIDSIDRQWYVVDAENQTLGRLATEVASILRGKNNPNFTPHLDTGDFVVVVNAEKIQVSGKKPQQKLYRRHSGRPGGMKVETFESLQERIPERIVEKAIKGMLPHNALGRQMYRKLKVYKGTEHPHSAQKPQPLQLNPSATAK.

Residues 127-150 form a disordered region; the sequence is KGTEHPHSAQKPQPLQLNPSATAK. The span at 136–150 shows a compositional bias: polar residues; the sequence is QKPQPLQLNPSATAK.

This sequence belongs to the universal ribosomal protein uL13 family. Part of the 50S ribosomal subunit.

This protein is one of the early assembly proteins of the 50S ribosomal subunit, although it is not seen to bind rRNA by itself. It is important during the early stages of 50S assembly. The sequence is that of Large ribosomal subunit protein uL13 from Synechococcus sp. (strain CC9902).